A 344-amino-acid chain; its full sequence is tRNA N6-adenosine threonylcarbamoyltransferase (344 aa).

2 residues coordinate Fe cation: His-111 and His-115. Residues 134–138 (LVSGG), Asp-167, Gly-180, Asp-184, and Asn-277 contribute to the substrate site. Asp-305 is a Fe cation binding site.

Belongs to the KAE1 / TsaD family. Requires Fe(2+) as cofactor.

Its subcellular location is the cytoplasm. It carries out the reaction L-threonylcarbamoyladenylate + adenosine(37) in tRNA = N(6)-L-threonylcarbamoyladenosine(37) in tRNA + AMP + H(+). Required for the formation of a threonylcarbamoyl group on adenosine at position 37 (t(6)A37) in tRNAs that read codons beginning with adenine. Is involved in the transfer of the threonylcarbamoyl moiety of threonylcarbamoyl-AMP (TC-AMP) to the N6 group of A37, together with TsaE and TsaB. TsaD likely plays a direct catalytic role in this reaction. In Microcystis aeruginosa (strain NIES-843 / IAM M-2473), this protein is tRNA N6-adenosine threonylcarbamoyltransferase.